A 312-amino-acid chain; its full sequence is Acetylglutamate kinase (312 aa).

Substrate contacts are provided by residues 69 to 70 (GG), R91, and N191.

The protein belongs to the acetylglutamate kinase family. ArgB subfamily.

The protein localises to the cytoplasm. It carries out the reaction N-acetyl-L-glutamate + ATP = N-acetyl-L-glutamyl 5-phosphate + ADP. It participates in amino-acid biosynthesis; L-arginine biosynthesis; N(2)-acetyl-L-ornithine from L-glutamate: step 2/4. Its function is as follows. Catalyzes the ATP-dependent phosphorylation of N-acetyl-L-glutamate. The sequence is that of Acetylglutamate kinase from Streptomyces griseus subsp. griseus (strain JCM 4626 / CBS 651.72 / NBRC 13350 / KCC S-0626 / ISP 5235).